We begin with the raw amino-acid sequence, 287 residues long: Ciliary microtubule inner protein 6 (287 aa).

2 stretches are compositionally biased toward basic and acidic residues: residues 1–15 and 25–34; these read MEEKEDKHQQHKIED and EEIKHEEKPG. Positions 1 to 42 are disordered; that stretch reads MEEKEDKHQQHKIEDAAITYVSENEEIKHEEKPGKSIHHSKS. Residues 128–160 are mn 1; the sequence is GIVPLASPGTSAELQNNFIEYISFIHQYDARKT. Residues 179–287 are disordered; sequence KPGSRPTVPK…PLNPPIKKSE (109 aa). Basic and acidic residues-rich tracts occupy residues 203 to 212 and 232 to 245; these read EQSKKTEKGN and LEPKTHLSETDVRQ. The tract at residues 213-246 is mn 2; it reads SAESRMISPGLCQQNSQELLEPKTHLSETDVRQA.

The protein resides in the cell projection. It localises to the cilium. The protein is Ciliary microtubule inner protein 6 of Homo sapiens (Human).